We begin with the raw amino-acid sequence, 359 residues long: MKAATAYINTDALTHNIRQLHLQAPNSKLLAVVKANGYGHGLLHVAKSLPDADAFGVARIEEALTLRAGGVVKPILLLEGFYGASDLPVIVTNNIHTVVHSIEQLEALESAELDNQAVVWLKIDTGMHRLGVRPEQLDDVVQRLHACDNVAKPLRYMSHFGCADDLASNVTNQQINTFLSLTEGCRGERSLAASAGILAWPDSQLEWIRPGIIMYGVSPFTEPDRSAEAFNMQPVMTLTSSLIAVRDVKEGEQVGYGGIWTSERDTKVGVIAIGYGDGYPRTAPNGTPVLVNGRIVPMAGRVSMDMLTVDLGPNAQDKVGDEAILWGNGLPAEVVAEHIGTIAYELVTKLTSRVDMTYL.

Residue K34 is the Proton acceptor; specific for D-alanine of the active site. Position 34 is an N6-(pyridoxal phosphate)lysine (K34). R129 contacts substrate. The active-site Proton acceptor; specific for L-alanine is the Y256. M304 serves as a coordination point for substrate.

It belongs to the alanine racemase family. Pyridoxal 5'-phosphate serves as cofactor.

The catalysed reaction is L-alanine = D-alanine. It functions in the pathway amino-acid biosynthesis; D-alanine biosynthesis; D-alanine from L-alanine: step 1/1. Its function is as follows. Catalyzes the interconversion of L-alanine and D-alanine. May also act on other amino acids. The chain is Alanine racemase (alr) from Photobacterium profundum (strain SS9).